A 342-amino-acid chain; its full sequence is Phosphate acyltransferase (342 aa).

The protein belongs to the PlsX family. As to quaternary structure, homodimer. Probably interacts with PlsY.

It is found in the cytoplasm. The catalysed reaction is a fatty acyl-[ACP] + phosphate = an acyl phosphate + holo-[ACP]. The protein operates within lipid metabolism; phospholipid metabolism. Catalyzes the reversible formation of acyl-phosphate (acyl-PO(4)) from acyl-[acyl-carrier-protein] (acyl-ACP). This enzyme utilizes acyl-ACP as fatty acyl donor, but not acyl-CoA. This is Phosphate acyltransferase from Leuconostoc mesenteroides subsp. mesenteroides (strain ATCC 8293 / DSM 20343 / BCRC 11652 / CCM 1803 / JCM 6124 / NCDO 523 / NBRC 100496 / NCIMB 8023 / NCTC 12954 / NRRL B-1118 / 37Y).